Consider the following 546-residue polypeptide: NAD(P)H-quinone oxidoreductase chain 4 (546 aa).

The next 14 membrane-spanning stretches (helical) occupy residues 17-37 (VPWL…VPFI), 48-68 (WYAL…YLNG), 103-123 (LILL…PVSF), 127-147 (LFYF…AVQD), 149-169 (LLFF…LAIW), 181-201 (FILY…AMGF), 222-242 (GFQL…LPIV), 256-276 (TAPV…YALL), 290-310 (FAPL…LTSF), 327-347 (MGFV…GAML), 348-368 (QMIS…ATYD), 389-409 (FALW…SGFV), 430-450 (VVIC…LLSM), and 477-497 (VYII…PRLM).

It belongs to the complex I subunit 4 family.

Its subcellular location is the cellular thylakoid membrane. The catalysed reaction is a plastoquinone + NADH + (n+1) H(+)(in) = a plastoquinol + NAD(+) + n H(+)(out). The enzyme catalyses a plastoquinone + NADPH + (n+1) H(+)(in) = a plastoquinol + NADP(+) + n H(+)(out). In terms of biological role, NDH-1 shuttles electrons from NAD(P)H, via FMN and iron-sulfur (Fe-S) centers, to quinones in the respiratory chain. The immediate electron acceptor for the enzyme in this species is believed to be plastoquinone. Couples the redox reaction to proton translocation (for every two electrons transferred, four hydrogen ions are translocated across the cytoplasmic membrane), and thus conserves the redox energy in a proton gradient. The chain is NAD(P)H-quinone oxidoreductase chain 4 from Parasynechococcus marenigrum (strain WH8102).